Reading from the N-terminus, the 512-residue chain is Podocan-like protein 1 (512 aa).

A signal peptide spans 1 to 26; sequence MAESGLAMWPSLLLLLLLPGPPPVAG. Residues 37–74 enclose the LRRNT domain; the sequence is ESLQPLPRACPLRCSCPRVDTVDCDGLDLRVFPDNITR. A glycan (N-linked (GlcNAc...) asparagine) is linked at Asn-71. LRR repeat units follow at residues 75 to 96, 99 to 119, 125 to 146, 147 to 167, 170 to 193, 196 to 216, 217 to 238, 241 to 261, 267 to 288, 289 to 309, 312 to 332, 338 to 359, 360 to 380, 383 to 396, 409 to 430, 431 to 451, and 454 to 474; these read AAQHLSLQNNQLQELPYNELSR, GLRTLNLHNNLISSEGLPDEA, QLQHLCVAHNKLSVAPQFLPRS, LRVADLAANQVMEIFPLTFGE, ALRSVYLHNNQLSNAGLPPDAFRG, AIATLSLSNNQLSYLPPSLPP, SLERLHLQNNLISKVPRGALSR, QLRELYLQHNQLTDSGLDATT, SLEYLDLSHNQLTTVPAGLPRT, LAILHLGRNRIRQVEAARLHG, GLRYLLLQHNQLGSSGLPAGA, GLHTLHLYGNGLDRVPPALPRR, LRALVLPHNHVAALGARDLVA, GLTELNLAYNRLAS, ALRSLDLAGNQLTRLPMGLPTG, LRTLQLQRNQLRMLEPEPLAG, and QLRELSLAHNRLRVGDIGPGT.

The protein belongs to the small leucine-rich proteoglycan (SLRP) family. SLRP class V subfamily. In terms of processing, N-glycosylated.

It localises to the secreted. The protein localises to the extracellular space. Its subcellular location is the extracellular matrix. The polypeptide is Podocan-like protein 1 (PODNL1) (Homo sapiens (Human)).